The primary structure comprises 375 residues: FAD-dependent catabolic D-arginine dehydrogenase DauA (375 aa).

Residues Ala-14, Glu-32–Arg-33, Ser-41–His-48, Ala-171, and Gly-331–Gln-336 contribute to the FAD site.

It belongs to the FAD-dependent glycerol-3-phosphate dehydrogenase family. In terms of assembly, monomer. FAD is required as a cofactor.

It catalyses the reaction D-arginine + A + H2O = 5-guanidino-2-oxopentanoate + AH2 + NH4(+). It carries out the reaction a D-alpha-amino acid + A + H2O = a 2-oxocarboxylate + AH2 + NH4(+). Its activity is regulated as follows. Inhibited by D-arginine and D-lysine at high concentration. Functionally, dauA is highly expressed within the cystic fibrosis (CF) lung, and it is required for virulence via the optimal production of hydrogen cyanide, pyocyanine, pyoverdine, rhamnolipid and alginate during biofilm formation. Involved in the catabolism of D-lysine and D-arginine. Under aerobic conditions, the arginine succinyltransferase (AST) and arginine transaminase (ATA) pathways are 2 major routes for L-arginine utilization as the sole source of carbon and nitrogen. The D-to-L racemization of arginine by DauA and DauB is necessary, before to be channeled into the AST and/or ATA pathways. DauA catalyzes the flavin-dependent oxidative deamination of D-arginine into 2-ketoarginine (2-KA) and ammonia. It also has dehydrogenase activity towards D-lysine, D-tyrosine, D-methionine, D-phenylalanine, D-ornithine, D-histidine and D-leucine as substrates. This Pseudomonas aeruginosa (strain ATCC 15692 / DSM 22644 / CIP 104116 / JCM 14847 / LMG 12228 / 1C / PRS 101 / PAO1) protein is FAD-dependent catabolic D-arginine dehydrogenase DauA.